The following is a 463-amino-acid chain: RuvB-like helicase 2 (463 aa).

Residue 76-83 (GPPSTGKT) participates in ATP binding.

Belongs to the RuvB family. May form heterododecamers with RVB1. Component of the SWR1 chromatin remodeling complex, the INO80 chromatin remodeling complex, and of the R2TP complex.

It localises to the nucleus. The catalysed reaction is ATP + H2O = ADP + phosphate + H(+). Functionally, DNA helicase which participates in several chromatin remodeling complexes, including the SWR1 and the INO80 complexes. The SWR1 complex mediates the ATP-dependent exchange of histone H2A for the H2A variant HZT1 leading to transcriptional regulation of selected genes by chromatin remodeling. The INO80 complex remodels chromatin by shifting nucleosomes and is involved in DNA repair. Also involved in pre-rRNA processing. The polypeptide is RuvB-like helicase 2 (RVB2) (Cryptococcus neoformans var. neoformans serotype D (strain JEC21 / ATCC MYA-565) (Filobasidiella neoformans)).